Consider the following 126-residue polypeptide: Ribosome-binding factor A (126 aa).

Belongs to the RbfA family. In terms of assembly, monomer. Binds 30S ribosomal subunits, but not 50S ribosomal subunits or 70S ribosomes.

It localises to the cytoplasm. Its function is as follows. One of several proteins that assist in the late maturation steps of the functional core of the 30S ribosomal subunit. Associates with free 30S ribosomal subunits (but not with 30S subunits that are part of 70S ribosomes or polysomes). Required for efficient processing of 16S rRNA. May interact with the 5'-terminal helix region of 16S rRNA. The chain is Ribosome-binding factor A from Geobacillus sp. (strain WCH70).